A 98-amino-acid polypeptide reads, in one-letter code: Ribonuclease kappa (98 aa).

The next 2 membrane-spanning stretches (helical) occupy residues 13 to 33 (ACGI…GIFF) and 65 to 85 (VSYN…FSFC).

This sequence belongs to the RNase K family. As to quaternary structure, interacts with the proton translocation complex V0 of the V-ATPase. Interacts with ATP6AP1.

The protein resides in the endomembrane system. The protein localises to the cytoplasmic vesicle. It localises to the clathrin-coated vesicle membrane. Endoribonuclease which preferentially cleaves ApU and ApG phosphodiester bonds. Hydrolyzes UpU bonds at a lower rate. Regulates the activity of vacuolar (H+)-ATPase (V-ATPase) which is responsible for acidifying and maintaining the pH of intracellular compartments. Required at an early stage of receptor-mediated endocytosis. The chain is Ribonuclease kappa (Rnasek) from Mus musculus (Mouse).